Consider the following 498-residue polypeptide: Probable malate:quinone oxidoreductase (498 aa).

The protein belongs to the MQO family. FAD is required as a cofactor.

It catalyses the reaction (S)-malate + a quinone = a quinol + oxaloacetate. It functions in the pathway carbohydrate metabolism; tricarboxylic acid cycle; oxaloacetate from (S)-malate (quinone route): step 1/1. The chain is Probable malate:quinone oxidoreductase from Prochlorococcus marinus (strain AS9601).